The sequence spans 132 residues: Small ribosomal subunit protein uS8 (132 aa).

The protein belongs to the universal ribosomal protein uS8 family. In terms of assembly, part of the 30S ribosomal subunit. Contacts proteins S5 and S12.

One of the primary rRNA binding proteins, it binds directly to 16S rRNA central domain where it helps coordinate assembly of the platform of the 30S subunit. The protein is Small ribosomal subunit protein uS8 of Halalkalibacterium halodurans (strain ATCC BAA-125 / DSM 18197 / FERM 7344 / JCM 9153 / C-125) (Bacillus halodurans).